We begin with the raw amino-acid sequence, 563 residues long: Choline transporter (563 aa).

A disordered region spans residues 1 to 25; it reads MSIRNDNASGGYMQPDQSSNASMHK. Residues 1-57 lie on the Extracellular side of the membrane; that stretch reads MSIRNDNASGGYMQPDQSSNASMHKRDLRVEEEIKPLDDMDSKGAVAADGEVHLRKS. 2 N-linked (GlcNAc...) asparagine glycosylation sites follow: Asn-7 and Asn-20. Residues Ser-22 and Ser-42 each carry the phosphoserine modification. Residues 58–78 form a helical membrane-spanning segment; the sequence is FSLWSILGVGFGLTNSWFGIS. Topologically, residues 79 to 87 are cytoplasmic; sequence TSMVAGISS. A helical membrane pass occupies residues 88-108; sequence GGPMMIVYGIIIVALISICIG. The Extracellular segment spans residues 109-182; sequence TSLGELSSAY…LTHPEFIPKR (74 aa). The chain crosses the membrane as a helical span at residues 183 to 203; sequence WHIFVCFELLHLFLMFFNCYG. The Cytoplasmic portion of the chain corresponds to 204-205; sequence KS. The helical transmembrane segment at 206–226 threads the bilayer; sequence LPIISSSSLYISLLSFFTITI. The Extracellular segment spans residues 227–255; sequence TVLACSHGKFNDAKFVFATFNNETGWKNG. An N-linked (GlcNAc...) asparagine glycan is attached at Asn-248. A helical transmembrane segment spans residues 256–276; the sequence is GIAFIVGLINPAWSFSCLDCA. Topologically, residues 277-293 are cytoplasmic; that stretch reads THMAFEVEKPERVIPIA. Residues 294 to 314 form a helical membrane-spanning segment; sequence IMGTVAIGFVTSFCYVIAMFF. At 315–342 the chain is on the extracellular side; it reads SIQDLDAVLSSTTGAPILDIYNQALGNK. A glycan (N-linked (GlcNAc...) asparagine) is linked at Asn-341. Residues 343–363 form a helical membrane-spanning segment; it reads SGAIFLGCLILFTSFGCVIAC. At 364-398 the chain is on the cytoplasmic side; it reads HTWQARLCWSFARDNGLPLSRLWSQVNPHTGVPLN. The chain crosses the membrane as a helical span at residues 399–417; that stretch reads AHLMSCAWITLIGLLYLAS. The Extracellular segment spans residues 418-426; the sequence is STAFQSLIT. The chain crosses the membrane as a helical span at residues 427 to 445; that stretch reads GCIAFLLLSYIIPVICLLA. At 446–465 the chain is on the cytoplasmic side; it reads KKRNIAHGPFWLGKFGFFSN. Residues 466–486 form a helical membrane-spanning segment; it reads IVLLGWTVFSVVFFSFPPVLP. Residues 487 to 491 lie on the Extracellular side of the membrane; the sequence is VTKDN. Residues 492-512 form a helical membrane-spanning segment; the sequence is MNYVCVVIVGYTAYSILYWKY. Residues 513–563 are Cytoplasmic-facing; sequence KGKKEFHALEESENEQAEYSNNFDTIEDSREFSVAASDVELENEHVPWGKK.

The protein belongs to the amino acid-polyamine-organocation (APC) superfamily. Amino acid/choline transporter (ACT) (TC 2.A.3.4) family.

Its subcellular location is the membrane. It carries out the reaction choline(out) = choline(in). The enzyme catalyses ethanolamine(in) = ethanolamine(out). Its function is as follows. Sole choline transporter in yeast. Also transports ethanolamine. This is Choline transporter (HNM1) from Saccharomyces cerevisiae (strain ATCC 204508 / S288c) (Baker's yeast).